Here is an 842-residue protein sequence, read N- to C-terminus: Translation initiation factor IF-2 (842 aa).

Disordered regions lie at residues 1-41 and 112-219; these read MVAK…GFPD and RPNR…QTYQ. Composition is skewed to basic and acidic residues over residues 32–41 and 153–165; these read PEDKKQGFPD and RRGE…RDFS. The 170-residue stretch at 328-497 folds into the tr-type G domain; that stretch reads ARPPVVTVMG…MLQAEVMELR (170 aa). The tract at residues 337-344 is G1; sequence GHVDHGKT. 337–344 provides a ligand contact to GTP; sequence GHVDHGKT. Residues 362–366 form a G2 region; that stretch reads GITQH. A G3 region spans residues 383 to 386; it reads DTPG. Residues 383 to 387 and 437 to 440 each bind GTP; these read DTPGH and NKID. Residues 437–440 form a G4 region; that stretch reads NKID. Residues 473–475 are G5; the sequence is SAL.

It belongs to the TRAFAC class translation factor GTPase superfamily. Classic translation factor GTPase family. IF-2 subfamily.

The protein resides in the cytoplasm. Its function is as follows. One of the essential components for the initiation of protein synthesis. Protects formylmethionyl-tRNA from spontaneous hydrolysis and promotes its binding to the 30S ribosomal subunits. Also involved in the hydrolysis of GTP during the formation of the 70S ribosomal complex. This is Translation initiation factor IF-2 (infB) from Treponema pallidum (strain Nichols).